Reading from the N-terminus, the 299-residue chain is Bifunctional methyltransferase-like/endonuclease (299 aa).

Residues 1–80 (MLSSKLLDIN…NLIVSPMQKA (80 aa)) are probable methylated-DNA--protein-cysteine methyltransferase-like. Residues 81-299 (LLEKEVKIIG…GRGDSNPGRD (219 aa)) are endonuclease V. Asp135 and Asn197 together coordinate Mg(2+).

This sequence in the N-terminal section; belongs to the MGMT family. In the C-terminal section; belongs to the endonuclease V family. The cofactor is Mg(2+).

The protein resides in the cytoplasm. The catalysed reaction is Endonucleolytic cleavage at apurinic or apyrimidinic sites to products with a 5'-phosphate.. Its function is as follows. DNA repair enzyme involved in the repair of deaminated bases. Selectively cleaves double-stranded DNA at the second phosphodiester bond 3' to a deoxyinosine leaving behind the intact lesion on the nicked DNA. The protein is Bifunctional methyltransferase-like/endonuclease of Nanoarchaeum equitans (strain Kin4-M).